Reading from the N-terminus, the 256-residue chain is Small ribosomal subunit protein uS2 (256 aa).

This sequence belongs to the universal ribosomal protein uS2 family.

The chain is Small ribosomal subunit protein uS2 from Brucella melitensis biotype 1 (strain ATCC 23456 / CCUG 17765 / NCTC 10094 / 16M).